The primary structure comprises 429 residues: Fez family zinc finger protein 1 (429 aa).

The Engrailed homology 1 repressor signature appears at 29 to 44 (PLAFSIERIMARTPEP). 6 C2H2-type zinc fingers span residues 247-269 (FTCEVCGKVFNAHYNLTRHMPVH), 275-297 (FVCKVCGKGFRQASTLCRHKIIH), 303-325 (HKCNQCGKAFNRSSTLNTHTRIH), 331-353 (FICEFCGKGFHQKGNYKNHKLTH), 359-381 (FKCNICNKAFHQVYNLTFHMHTH), and 387-410 (FTCPTCGKGFCRNFDLKKHIRKLH). Positions 409–429 (LHDISPGPHSPPTPTGNTEGQ) are disordered.

It belongs to the krueppel C2H2-type zinc-finger protein family.

Its subcellular location is the nucleus. Its function is as follows. Transcription repressor. Involved in the development of the forebrain region. In Danio rerio (Zebrafish), this protein is Fez family zinc finger protein 1 (fezf1).